Here is a 417-residue protein sequence, read N- to C-terminus: MNIENYVIETASLAKSAARKMSIVSTVTKNNALNAMADALIENTNAIIEANKKDMENGREKGLTESLLDRLLLDEARIKSMAQGLRDVASLEDPIGEVIRMWRRPNNLKIGQIRVPLGVIGIIYEARPNVTVDAAALCVKSGNAVILRGGSEAINSNTTVARIISEAATKAGLPEGAINLIENPSRDAVNVMMKLNDYIDVLIPRGGAGLINAVVKNATVPVIQTGVGNCHVFVDASADLEMAANIVINAKTQRPAVCNAMESLLVHKDIADKFLPYLAEKLKPLNVEIKGCIRTQSLVEGATEATEEDWAKEYLDFKFASKVVDSLDEALDHIYKYSTKHSEVIVTNNYENSQRFLAEVDAAAVYVNASSRFTDGSEFGFGAEIGISTQKLHARGPMGLKELTSSKYIIYGEGQIR.

Belongs to the gamma-glutamyl phosphate reductase family.

The protein resides in the cytoplasm. The enzyme catalyses L-glutamate 5-semialdehyde + phosphate + NADP(+) = L-glutamyl 5-phosphate + NADPH + H(+). The protein operates within amino-acid biosynthesis; L-proline biosynthesis; L-glutamate 5-semialdehyde from L-glutamate: step 2/2. In terms of biological role, catalyzes the NADPH-dependent reduction of L-glutamate 5-phosphate into L-glutamate 5-semialdehyde and phosphate. The product spontaneously undergoes cyclization to form 1-pyrroline-5-carboxylate. This Clostridium novyi (strain NT) protein is Gamma-glutamyl phosphate reductase.